The sequence spans 288 residues: MAKLYKATGINLKAMALGESDRLLTILTPEYGLIRVVAPGVRKQKSKLGGRGELFVVNQLLISKGRSLDRINQAETITSYTGLSQNLGKLAAGQYLAELVQQIALKENPQTELFHLLNEHLERIEQLQHKTDRLWSTQLIAFLAHGIYHLLAIEGIAPQVHQCCATGNELQPDFNNSKWQVGFSIDAGGIIKVDETSVVQSFCKDLSDYYLSTKINTLINANQLSLLQQLPQPQLQTIVKLTSYQDWVKVEQLLRKYTQYHLGYSIRSAELIDTYLKSISPLINNATI.

Belongs to the RecO family.

Its function is as follows. Involved in DNA repair and RecF pathway recombination. The sequence is that of DNA repair protein RecO from Trichodesmium erythraeum (strain IMS101).